The following is a 429-amino-acid chain: Adenylosuccinate synthetase (429 aa).

GTP contacts are provided by residues 12–18 and 40–42; these read GDEGKGK and GHT. Residue aspartate 13 is the Proton acceptor of the active site. Mg(2+)-binding residues include aspartate 13 and glycine 40. Residues 13–16, 38–41, threonine 129, arginine 143, glutamine 223, threonine 238, and arginine 302 contribute to the IMP site; these read DEGK and NAGH. Histidine 41 functions as the Proton donor in the catalytic mechanism. 298-304 serves as a coordination point for substrate; it reads VVTGRKR. Residues arginine 304, 330–332, and 412–414 each bind GTP; these read KLD and STS.

It belongs to the adenylosuccinate synthetase family. In terms of assembly, homodimer. The cofactor is Mg(2+).

Its subcellular location is the cytoplasm. It catalyses the reaction IMP + L-aspartate + GTP = N(6)-(1,2-dicarboxyethyl)-AMP + GDP + phosphate + 2 H(+). Its pathway is purine metabolism; AMP biosynthesis via de novo pathway; AMP from IMP: step 1/2. Its function is as follows. Plays an important role in the de novo pathway of purine nucleotide biosynthesis. Catalyzes the first committed step in the biosynthesis of AMP from IMP. This chain is Adenylosuccinate synthetase, found in Bartonella henselae (strain ATCC 49882 / DSM 28221 / CCUG 30454 / Houston 1) (Rochalimaea henselae).